The following is a 688-amino-acid chain: MQDIQLDKRLSELLSQAVTPQNAQPLMQALCQSLNEHNIRYYVDDAPSITDSEYDRLMQRLKQLEAEYPQFVAADSPTQRVGGMALAKFEQITHLKPMLSLDNAFDEADFSAFHKRVSDRVGEVSFCCEPKLDGLAVSILYRNGVLERAATRGDGTVGEDITENVKTIKSIPLKLRGDNYPELVEVRGEAFMPKAAFEALNERARLKDEKLFVNPRNAAAGSLRQLDSKITASRALSFYAYALGVVEPTSHELAKTHYEQLQQLKSWGLPVSSEIKVCDELSQVFAYYQDILTRRADLPFEIDGVVMKVNDIAQQQTLGFVAKSPRWAIAYKFPAQEEMTLLEGVDFQVGRTGAVTPVARLKPVFVGGVTVSNATLHNADEIERLGVMVGDTVIIRRAGDVIPQIVAIVPERRPEDAKAIAFPQHCPVCGSLVERLEGEAVTRCSGGLFCEAQRKEAIKHFASRKALDIDGMGDKIVEQLIDKELVQSPADLFKLTASMMTMLDRMGMKSATNLAQAIEAAKTTTLPRFLYALGIREVGEATAANLATHFGSLEALRVATIEQLIQVEDIGEVVAQHVAHFFAQPHNLEVIDALITAGVNWPTIAAPSADEQPLKGQTWVLTGTLNQLNRNDAKAQLQALGAKVAGSVSKNTDCLVAGEAAGSKLAKAQELGVKVIGEDELLALLANS.

Residues 51–55, 100–101, and E129 contribute to the NAD(+) site; these read DSEYD and SL. K131 acts as the N6-AMP-lysine intermediate in catalysis. Residues R152, E189, K308, and K332 each coordinate NAD(+). Zn(2+)-binding residues include C426, C429, C444, and C450. One can recognise a BRCT domain in the interval 609 to 688; the sequence is ADEQPLKGQT…DELLALLANS (80 aa).

The protein belongs to the NAD-dependent DNA ligase family. LigA subfamily. The cofactor is Mg(2+). Mn(2+) is required as a cofactor.

The catalysed reaction is NAD(+) + (deoxyribonucleotide)n-3'-hydroxyl + 5'-phospho-(deoxyribonucleotide)m = (deoxyribonucleotide)n+m + AMP + beta-nicotinamide D-nucleotide.. DNA ligase that catalyzes the formation of phosphodiester linkages between 5'-phosphoryl and 3'-hydroxyl groups in double-stranded DNA using NAD as a coenzyme and as the energy source for the reaction. It is essential for DNA replication and repair of damaged DNA. The protein is DNA ligase of Shewanella sp. (strain MR-7).